The primary structure comprises 339 residues: Thermospermine synthase ACAULIS5 (339 aa).

Residues 33-270 (CHWYEETIDD…DTWGWVMASD (238 aa)) enclose the PABS domain. S-adenosyl 3-(methylsulfanyl)propylamine-binding positions include Gln62, Glu117, Asp137, and 168–169 (DA). Residue Asp186 is the Proton acceptor of the active site.

The protein belongs to the spermidine/spermine synthase family. Highly expressed in stem internodes and roots. Lower levels in young seedlings before flowering and rosette leaves. Expressed in the vascular tissues. Restricted to procambial and/or provascular cells during primary root development and early leaves development.

The catalysed reaction is S-adenosyl 3-(methylsulfanyl)propylamine + spermidine = thermospermine + S-methyl-5'-thioadenosine + H(+). Required for correct xylem specification through regulation of the lifetime of the xylem elements. Prevents premature death of the xylem vessel elements. This is Thermospermine synthase ACAULIS5 (ACL5) from Arabidopsis thaliana (Mouse-ear cress).